We begin with the raw amino-acid sequence, 182 residues long: ADP-ribosylation factor 1 (182 aa).

Gly-2 carries the N-myristoyl glycine lipid modification. Residues 24-31 (GLDAAGKT), 67-71 (DVGGQ), and 126-129 (NKQD) each bind GTP.

The protein belongs to the small GTPase superfamily. Arf family.

It localises to the golgi apparatus. It carries out the reaction GTP + H2O = GDP + phosphate + H(+). In terms of biological role, GTP-binding protein involved in protein trafficking; may modulate vesicle budding and uncoating within the Golgi apparatus. This is ADP-ribosylation factor 1 (arfA) from Dictyostelium discoideum (Social amoeba).